The following is a 310-amino-acid chain: L-lactate dehydrogenase (310 aa).

Val-11, Asp-32, and Arg-37 together coordinate NAD(+). Substrate is bound by residues Gln-79, Arg-85, and 117–120 (NPVD). Residues 115–117 (VTN) and Thr-140 each bind NAD(+). Residue 145-148 (DTAR) participates in substrate binding. Beta-D-fructose 1,6-bisphosphate contacts are provided by Arg-150 and His-165. Catalysis depends on His-172, which acts as the Proton acceptor. Tyr-221 bears the Phosphotyrosine mark. A substrate-binding site is contributed by Thr-230.

It belongs to the LDH/MDH superfamily. LDH family. As to quaternary structure, homotetramer.

Its subcellular location is the cytoplasm. The catalysed reaction is (S)-lactate + NAD(+) = pyruvate + NADH + H(+). Its pathway is fermentation; pyruvate fermentation to lactate; (S)-lactate from pyruvate: step 1/1. Allosterically activated by fructose 1,6-bisphosphate (FBP). Functionally, catalyzes the conversion of lactate to pyruvate. This is L-lactate dehydrogenase from Fervidobacterium nodosum (strain ATCC 35602 / DSM 5306 / Rt17-B1).